The chain runs to 166 residues: Large ribosomal subunit protein uL10 (166 aa).

It belongs to the universal ribosomal protein uL10 family. Part of the ribosomal stalk of the 50S ribosomal subunit. The N-terminus interacts with L11 and the large rRNA to form the base of the stalk. The C-terminus forms an elongated spine to which L12 dimers bind in a sequential fashion forming a multimeric L10(L12)X complex.

Functionally, forms part of the ribosomal stalk, playing a central role in the interaction of the ribosome with GTP-bound translation factors. This is Large ribosomal subunit protein uL10 from Bacillus cereus (strain ATCC 14579 / DSM 31 / CCUG 7414 / JCM 2152 / NBRC 15305 / NCIMB 9373 / NCTC 2599 / NRRL B-3711).